Consider the following 426-residue polypeptide: Glutamyl-tRNA reductase (426 aa).

Substrate is bound by residues 49 to 52 (TCNR), Ser-107, 112 to 114 (EPQ), and Gln-118. Residue Cys-50 is the Nucleophile of the active site. 187–192 (GAGETI) serves as a coordination point for NADP(+).

It belongs to the glutamyl-tRNA reductase family. Homodimer.

It carries out the reaction (S)-4-amino-5-oxopentanoate + tRNA(Glu) + NADP(+) = L-glutamyl-tRNA(Glu) + NADPH + H(+). It participates in porphyrin-containing compound metabolism; protoporphyrin-IX biosynthesis; 5-aminolevulinate from L-glutamyl-tRNA(Glu): step 1/2. Catalyzes the NADPH-dependent reduction of glutamyl-tRNA(Glu) to glutamate 1-semialdehyde (GSA). The chain is Glutamyl-tRNA reductase from Ectopseudomonas mendocina (strain ymp) (Pseudomonas mendocina).